The chain runs to 83 residues: Neurotoxin LmNaTx3 (83 aa).

The signal sequence occupies residues 1–21 (MQLKIQLLMLVLMIVLTDVYS). Positions 22 to 83 (KDGFIVSKKN…NIAMKNKNYC (62 aa)) constitute an LCN-type CS-alpha/beta domain. 4 cysteine pairs are disulfide-bonded: C32–C83, C36–C59, C45–C64, and C49–C66.

Belongs to the long (4 C-C) scorpion toxin superfamily. Sodium channel inhibitor family. Alpha subfamily. As to expression, expressed by the venom gland.

Its subcellular location is the secreted. Binds voltage-independently at site-3 of voltage-gated sodium channels (Nav) and inhibits the inactivation of the activated channels, thereby blocking neuronal transmission. This chain is Neurotoxin LmNaTx3, found in Lychas mucronatus (Chinese swimming scorpion).